We begin with the raw amino-acid sequence, 265 residues long: MTTFQAIFLGILQGLGEFLPISSSAHLIIFPWLFGWKEHSLVFDVALHLGTLLAVLVYFWKDYLDIVVQGIAKPKSEKGKLFWFIIVATIPGALFGYLFENIVEEVFRKQYLLIAIVLAVFGFILYYVDSIAKNKIELSKMNVFQAALIGVSQAFALFPGISRSGITMTTGLLLGLKKEAAAKFSFLMSAPIILGAGAVSLLKNINHVSAEFSNFAIGFFTSAVVGFLAIHFLLGIVKKSGFKIFAYYRFFLAAVILAFYLLRAV.

8 helical membrane passes run 14–34, 40–60, 79–99, 112–132, 141–161, 182–202, 217–237, and 242–262; these read GLGE…PWLF, SLVF…VYFW, GKLF…GYLF, LLIA…DSIA, MNVF…FPGI, AKFS…VSLL, IGFF…LGIV, and FKIF…FYLL.

This sequence belongs to the UppP family.

It localises to the cell membrane. It carries out the reaction di-trans,octa-cis-undecaprenyl diphosphate + H2O = di-trans,octa-cis-undecaprenyl phosphate + phosphate + H(+). Functionally, catalyzes the dephosphorylation of undecaprenyl diphosphate (UPP). Confers resistance to bacitracin. The protein is Undecaprenyl-diphosphatase of Caldicellulosiruptor bescii (strain ATCC BAA-1888 / DSM 6725 / KCTC 15123 / Z-1320) (Anaerocellum thermophilum).